The sequence spans 92 residues: Large ribosomal subunit protein bL28 (92 aa).

The protein belongs to the bacterial ribosomal protein bL28 family.

In Borrelia hermsii (strain HS1 / DAH), this protein is Large ribosomal subunit protein bL28.